The chain runs to 351 residues: Protein RecA (351 aa).

ATP is bound at residue 73 to 80; it reads GPESSGKT.

The protein belongs to the RecA family.

It localises to the cytoplasm. In terms of biological role, can catalyze the hydrolysis of ATP in the presence of single-stranded DNA, the ATP-dependent uptake of single-stranded DNA by duplex DNA, and the ATP-dependent hybridization of homologous single-stranded DNAs. It interacts with LexA causing its activation and leading to its autocatalytic cleavage. The protein is Protein RecA of Herbaspirillum seropedicae.